The chain runs to 217 residues: Snake venom metalloproteinase lebetase-4 (217 aa).

A propeptide spanning residues 1–14 (SCRKKASQLNLTPE) is cleaved from the precursor. Residue Q15 is modified to Pyrrolidone carboxylic acid. The region spanning 21–217 (RYIELVIVAD…HNPQCILNQP (197 aa)) is the Peptidase M12B domain. Ca(2+) contacts are provided by E24 and D108. Disulfide bonds link C132–C212, C172–C196, and C174–C179. H157 contributes to the Zn(2+) binding site. E158 is a catalytic residue. Zn(2+) is bound by residues H161 and H167. Ca(2+) contacts are provided by C212 and N215.

It belongs to the venom metalloproteinase (M12B) family. P-I subfamily. In terms of assembly, monomer. Zn(2+) serves as cofactor. In terms of tissue distribution, expressed by the venom gland.

It localises to the secreted. Fibrinolytic and caseinolytic activities are inhibited by Cd(2+), Cu(2+) and Co(2+) ions. Not inhibited by Mg(2+), Ca(2+) and Ba(2+). Also inhibited by EDTA, EGTA and 1,10-phenanthroline. In terms of biological role, snake venom zinc metalloprotease that hydrolyzes the Aalpha-chain and more slowly the Bbeta-chain of fibrin and fibrinogen. Also hydrolyzes casein and B-chain of oxidized insulin. Its fibrinolytic activity is direct, without any plasminogen activation. Inhibits ADP-induced and collagen-induced platelet aggregation. Shows low hemorrhagic activity. Cleaves the plasma proteinase inhibitors alpha(2)-macroglobulin (A2M) and alpha(2)M-related pregnancy zone protein (PZP), and is inhibited by them. The chain is Snake venom metalloproteinase lebetase-4 from Macrovipera lebetinus (Levantine viper).